The primary structure comprises 67 residues: Large ribosomal subunit protein bL31 (67 aa).

Residues cysteine 16, cysteine 18, cysteine 37, and cysteine 40 each contribute to the Zn(2+) site.

This sequence belongs to the bacterial ribosomal protein bL31 family. Type A subfamily. Part of the 50S ribosomal subunit. It depends on Zn(2+) as a cofactor.

In terms of biological role, binds the 23S rRNA. In Methylococcus capsulatus (strain ATCC 33009 / NCIMB 11132 / Bath), this protein is Large ribosomal subunit protein bL31.